A 480-amino-acid chain; its full sequence is Serine carboxypeptidase-like 35 (480 aa).

The N-terminal stretch at 1–20 (MKKNALWLLCILVLPAIACG) is a signal peptide. Asn-79 and Asn-146 each carry an N-linked (GlcNAc...) asparagine glycan. 3 disulfide bridges follow: Cys-95-Cys-363, Cys-257-Cys-270, and Cys-294-Cys-331. Residue Ser-188 is part of the active site. Asn-265 is a glycosylation site (N-linked (GlcNAc...) asparagine). Residue Asn-352 is glycosylated (N-linked (GlcNAc...) asparagine). Residues Asp-399 and His-452 contribute to the active site.

It belongs to the peptidase S10 family. Expressed in seedlings, flowers and siliques.

It localises to the secreted. Functionally, probable carboxypeptidase. In Arabidopsis thaliana (Mouse-ear cress), this protein is Serine carboxypeptidase-like 35 (SCPL35).